Here is a 534-residue protein sequence, read N- to C-terminus: CTP synthase (534 aa).

Residues 1–266 (MKQKFIFVTG…DELIVARLGL (266 aa)) are amidoligase domain. Serine 14 serves as a coordination point for CTP. Serine 14 provides a ligand contact to UTP. Residues 15–20 (SIGKGL) and aspartate 72 contribute to the ATP site. Mg(2+)-binding residues include aspartate 72 and glutamate 140. CTP is bound by residues 147-149 (DIE), 187-192 (KSKPTQ), and lysine 223. UTP-binding positions include 187–192 (KSKPTQ) and lysine 223. The Glutamine amidotransferase type-1 domain occupies 291 to 534 (KIGVVGKYVD…HFVKASLKKK (244 aa)). L-glutamine is bound at residue glycine 353. Cysteine 380 serves as the catalytic Nucleophile; for glutamine hydrolysis. Residues 381-384 (FGMQ), glutamate 404, and arginine 464 contribute to the L-glutamine site. Residues histidine 509 and glutamate 511 contribute to the active site.

Belongs to the CTP synthase family. As to quaternary structure, homotetramer.

It carries out the reaction UTP + L-glutamine + ATP + H2O = CTP + L-glutamate + ADP + phosphate + 2 H(+). The enzyme catalyses L-glutamine + H2O = L-glutamate + NH4(+). It catalyses the reaction UTP + NH4(+) + ATP = CTP + ADP + phosphate + 2 H(+). The protein operates within pyrimidine metabolism; CTP biosynthesis via de novo pathway; CTP from UDP: step 2/2. Allosterically activated by GTP, when glutamine is the substrate; GTP has no effect on the reaction when ammonia is the substrate. The allosteric effector GTP functions by stabilizing the protein conformation that binds the tetrahedral intermediate(s) formed during glutamine hydrolysis. Inhibited by the product CTP, via allosteric rather than competitive inhibition. Catalyzes the ATP-dependent amination of UTP to CTP with either L-glutamine or ammonia as the source of nitrogen. Regulates intracellular CTP levels through interactions with the four ribonucleotide triphosphates. In Bdellovibrio bacteriovorus (strain ATCC 15356 / DSM 50701 / NCIMB 9529 / HD100), this protein is CTP synthase.